The chain runs to 247 residues: MDVLSCSINTLKGLYDISGVEVGQHFYWQIGDFLVHGQVLITSWVVIAILLGSATVAVRNPQTIPTGGQNFFEYVLEFIRDVSKTQIGEEYGPWVPFIGTMFLFIFVSNWSGALLPWKILQLPHGELAAPTNDINTTVALALLTSAAYFYAGILKKGLGYFEKYIKPTPILLPINILEDFTKPLSLSFRLFGNILADELVVVVLVSLVPSVVPIPVMLLGLFTSGIQALIFATLAAAYIGESMEGHL.

A run of 5 helical transmembrane segments spans residues 33–53 (FLVH…LLGS), 95–115 (VPFI…GALL), 134–154 (INTT…AGIL), 199–219 (LVVV…VMLL), and 220–240 (GLFT…AYIG).

It belongs to the ATPase A chain family. F-type ATPases have 2 components, CF(1) - the catalytic core - and CF(0) - the membrane proton channel. CF(1) has five subunits: alpha(3), beta(3), gamma(1), delta(1), epsilon(1). CF(0) has four main subunits: a, b, b' and c.

Its subcellular location is the plastid membrane. Its function is as follows. Key component of the proton channel; it plays a direct role in the translocation of protons across the membrane. The chain is ATP synthase subunit a, plastid from Cuscuta exaltata (Tall dodder).